Consider the following 591-residue polypeptide: uncharacterized protein (591 aa).

Over residues 1–10 (MSIRGVGGNG) the composition is skewed to gly residues. 4 disordered regions span residues 1–37 (MSIRGVGGNGNSRIPSHNGDGSNRRSQNTKGNNKVED), 110–135 (RSSATRAAESGSSSRTARGASSGYRE), 324–344 (EESGWTRESASRMEGDEAQGP), and 487–517 (GHYQDPRASDYDLPRASDYDLPRSPYPTPPL). Residues 11–32 (NSRIPSHNGDGSNRRSQNTKGN) are compositionally biased toward polar residues. The span at 110–132 (RSSATRAAESGSSSRTARGASSG) shows a compositional bias: low complexity. The segment covering 490 to 507 (QDPRASDYDLPRASDYDL) has biased composition (basic and acidic residues).

The protein to C.muridarum TC_0268.

This is an uncharacterized protein from Chlamydia trachomatis serovar D (strain ATCC VR-885 / DSM 19411 / UW-3/Cx).